Reading from the N-terminus, the 642-residue chain is Kinesin-2b (642 aa).

Residues 12–344 (NVMVMVRVRP…LRYADRAKQI (333 aa)) enclose the Kinesin motor domain. 107 to 114 (GQTGSGKT) contacts ATP. ADP is bound by residues Gly110, Gly112, Lys113, and Thr114. Thr114 lines the Mg(2+) pocket. Residues 415–475 (VQSLRKNLDK…ERKAKERQLM (61 aa)) are a coiled coil.

This sequence belongs to the TRAFAC class myosin-kinesin ATPase superfamily. Kinesin family. Kinesin II subfamily.

It is found in the cell projection. The protein localises to the cilium. The protein resides in the flagellum. It localises to the cytoplasm. Its subcellular location is the cytoskeleton. It is found in the flagellum axoneme. The protein localises to the flagellum basal body. Involved in anterograde intraflagellar transport (IFT). Involved in flagellar assembly. In Giardia intestinalis (strain ATCC 50803 / WB clone C6) (Giardia lamblia), this protein is Kinesin-2b.